The sequence spans 205 residues: Recombination protein RecR (205 aa).

A C4-type zinc finger spans residues 58-75; sequence CSVCQNVTDRDADPCYIC. Positions 83–182 constitute a Toprim domain; that stretch reads SVICVVESPA…SVTKIARGIP (100 aa).

The protein belongs to the RecR family.

In terms of biological role, may play a role in DNA repair. It seems to be involved in an RecBC-independent recombinational process of DNA repair. It may act with RecF and RecO. The chain is Recombination protein RecR from Chlorobium limicola (strain DSM 245 / NBRC 103803 / 6330).